Consider the following 430-residue polypeptide: Sulfide-quinone reductase (430 aa).

FAD contacts are provided by residues 9-13 (GGGVG), 34-36 (SDR), 42-43 (TP), and Thr-105. The active-site Cysteine persulfide intermediate is the Cys-156. 2 disulfides stabilise this stretch: Cys-280-Cys-422 and Cys-419-Cys-430. Residues Val-294 and Gly-314 each contribute to the FAD site. Ile-346 is an a quinone binding site. Catalysis depends on Cys-347, which acts as the Cysteine persulfide intermediate. Lys-382 contributes to the FAD binding site.

Belongs to the SQRD family. Homotrimer. FAD is required as a cofactor.

It localises to the membrane. The enzyme catalyses n a quinone + n hydrogen sulfide + n H(+) = polysulfur(n-2) + n a quinol. Catalyzes the oxidation of hydrogen sulfide, with the help of a quinone. Consecutive reaction cycles lead to the accumulation of a polysulfide product on the active site Cys residues; these products are released when they exceed a critical length, typically as cyclooctasulfur. This chain is Sulfide-quinone reductase, found in Aquifex aeolicus (strain VF5).